The chain runs to 465 residues: Putative apoptosis inhibitor ORF106 (465 aa).

A BIR repeat occupies 291 to 357; sequence RECSFSTWPK…MEKETCGWLE (67 aa). Positions 373 to 382 are enriched in acidic residues; sequence EGGEDKEEDG. The segment at 373–393 is disordered; that stretch reads EGGEDKEEDGGGGGVIEFPKN. An RING-type zinc finger spans residues 405–447; that stretch reads CKACYERKADIAFIPCGHVFSCNICTMEMFASYKKKKRCPMCR.

The polypeptide is Putative apoptosis inhibitor ORF106 (Magallana gigas (Pacific oyster)).